Consider the following 155-residue polypeptide: MGVQKSEVEATSSVSAEKLFKGLCLDIDTLLPRVLPGAIKSSETLEGDGGVGTVKLVHLGDASPFKTMKQKVDAIDKATFTYSYSIIDGDILLGFIESINNHFTAVPNADGGCTVKSTIIFNTKGDAVVPEENIKFANDQNLTIFKAVEAYLIAN.

This sequence belongs to the BetVI family.

This is Pathogenesis-related protein B (PCPR1-3) from Petroselinum crispum (Parsley).